A 342-amino-acid chain; its full sequence is Signaling lymphocytic activation molecule (342 aa).

A signal peptide spans 1–26 (MDSRGFLSLRCLLVLALASKLSCGTG). The Extracellular segment spans residues 27-237 (ESLMNCPEVP…CRPESSVPRQ (211 aa)). Residues 29–138 (LMNCPEVPGK…QHFCLQLKLY (110 aa)) enclose the Ig-like V-type domain. N-linked (GlcNAc...) asparagine glycosylation is found at asparagine 57, asparagine 102, asparagine 125, asparagine 150, asparagine 157, asparagine 189, and asparagine 217. The region spanning 144–223 (PEIKVLNWTQ…PVSNRSWSFN (80 aa)) is the Ig-like C2-type domain. Intrachain disulfides connect cysteine 158–cysteine 228 and cysteine 164–cysteine 209. Residues 238–261 (WRLYAGLFLGGIVGVILIFEVVLL) form a helical membrane-spanning segment. The Cytoplasmic portion of the chain corresponds to 262-342 (LLRRRGKTNH…VYASVTFPES (81 aa)). The ITSM 1 signature appears at 282–287 (TIYAQV). Phosphotyrosine; by FYN occurs at positions 284, 310, and 334. An SH2-binding motif is present at residues 310–315 (YVAATE). An ITSM 2 motif is present at residues 332-337 (TVYASV).

In terms of assembly, interacts (via cytoplasmic domain) with SH2D1A and SH2D1B; SH2D1A mediates association with FYN. Interacts (via cytoplasmic domain phosphorylated on tyrosine residues) with INPP5D and PTPN11; presence of SH2D1A facilitates binding to INPP5D. Interacts with MAP4K1. Interacts with PIK3C3, BECN1 and UVRAG; indicative for an association with PI3K complex II (PI3KC3-C2). Interacts with canine distemper virus HN protein; suggesting that it may serve as a receptor. Phosphorylated on tyrosine residues by FYN.

The protein resides in the cell membrane. Functionally, self-ligand receptor of the signaling lymphocytic activation molecule (SLAM) family. SLAM receptors triggered by homo- or heterotypic cell-cell interactions are modulating the activation and differentiation of a wide variety of immune cells and thus are involved in the regulation and interconnection of both innate and adaptive immune response. Activities are controlled by presence or absence of small cytoplasmic adapter proteins, SH2D1A/SAP and/or SH2D1B/EAT-2. SLAMF1-induced signal-transduction events in T-lymphocytes are different from those in B-cells. Two modes of SLAMF1 signaling seem to exist: one depending on SH2D1A (and perhaps SH2D1B) and another in which protein-tyrosine phosphatase 2C (PTPN11)-dependent signal transduction operates. Initially it has been proposed that association with SH2D1A prevents binding to inhibitory effectors including INPP5D/SHIP1 and PTPN11/SHP-2. However, signaling is also regulated by SH2D1A which can simultaneously interact with and recruit FYN which subsequently phosphorylates and activates SLAMF1. Mediates IL-2-independent proliferation of activated T cells during immune responses and induces IFN-gamma production. Downstreaming signaling involves INPP5D/SHIP1, DOK1 and DOK2 leading to inhibited IFN-gamma production in T-cells, and PRKCQ, BCL10 and NFKB1 leading to increased T-cell activation and Th2 cytokine production. Promotes T-cell receptor-induced IL-4 secretion by CD4(+) cells. Inhibits antigen receptor-mediated production of IFN-gamma, but not IL-2, in CD4(-)/CD8(-) T-cells. Required for IL-4 production by germinal centers T follicular helper (T(Fh))cells. May inhibit CD40-induced signal transduction in monocyte-derived dendritic cells. May play a role in allergic responses and may regulate allergen-induced Th2 cytokine and Th1 cytokine secretion. In conjunction with SLAMF6 controls the transition between positive selection and the subsequent expansion and differentiation of the thymocytic natural killer T (NKT) cell lineage. Involved in the peripheral differentiation of indifferent natural killer T (iNKT) cells toward a regulatory NKT2 type. In macrophages involved in down-regulation of IL-12, TNF-alpha and nitric oxide in response to lipopolysaccharide (LPS). In B-cells activates the ERK signaling pathway independently of SH2D1A but implicating both, SYK and INPP5D, and activates Akt signaling dependent on SYK and SH2D1A. In conjunction with SLAMF5 and SLAMF6 may be a negative regulator of the humoral immune response. This is Signaling lymphocytic activation molecule (SLAMF1) from Canis lupus familiaris (Dog).